Consider the following 379-residue polypeptide: Cytochrome b (379 aa).

The next 4 membrane-spanning stretches (helical) occupy residues 33 to 53, 77 to 98, 113 to 133, and 178 to 198; these read FGSL…FLAM, WLIR…YLHI, WNIG…GYVL, and FFAF…IHLL. Heme b-binding residues include His83 and His97. Heme b contacts are provided by His182 and His196. Position 201 (His201) interacts with a ubiquinone. Transmembrane regions (helical) follow at residues 226–246, 288–308, 320–340, and 347–367; these read YKDL…ALFY, LGGV…PILH, ASQL…WIGG, and YIII…VLNP.

This sequence belongs to the cytochrome b family. The cytochrome bc1 complex contains 3 respiratory subunits (MT-CYB, CYC1 and UQCRFS1), 2 core proteins (UQCRC1 and UQCRC2) and probably 6 low-molecular weight proteins. Heme b serves as cofactor.

It is found in the mitochondrion inner membrane. Its function is as follows. Component of the ubiquinol-cytochrome c reductase complex (complex III or cytochrome b-c1 complex) that is part of the mitochondrial respiratory chain. The b-c1 complex mediates electron transfer from ubiquinol to cytochrome c. Contributes to the generation of a proton gradient across the mitochondrial membrane that is then used for ATP synthesis. The sequence is that of Cytochrome b (mt-cyb) from Anguilla interioris (Highlands long-finned eel).